The following is a 117-amino-acid chain: Nascent polypeptide-associated complex protein (117 aa).

The region spanning 3 to 72 (PVNPRDLEKM…YTVEKPREET (70 aa)) is the NAC-A/B domain.

Belongs to the NAC-alpha family. In terms of assembly, homodimer. Interacts with the ribosome. Binds ribosomal RNA.

Functionally, contacts the emerging nascent chain on the ribosome. This chain is Nascent polypeptide-associated complex protein, found in Aeropyrum pernix (strain ATCC 700893 / DSM 11879 / JCM 9820 / NBRC 100138 / K1).